The chain runs to 398 residues: uncharacterized protein (398 aa).

It belongs to the class-V pyridoxal-phosphate-dependent aminotransferase family. Homodimer.

Is essential for optimal growth. This is an uncharacterized protein from Mycobacterium tuberculosis (strain CDC 1551 / Oshkosh).